The primary structure comprises 110 residues: Multidrug transporter PA4990 (110 aa).

4 consecutive transmembrane segments (helical) span residues 7 to 27 (LAIA…VAGF), 31 to 51 (LPLL…VLVM), 58 to 78 (VVYA…AMFV), and 85 to 105 (PAAL…QLFS).

The protein belongs to the drug/metabolite transporter (DMT) superfamily. Small multidrug resistance (SMR) (TC 2.A.7.1) family.

It is found in the cell membrane. Confers resistance to ethidium bromide, acriflavine and methyl viologen. This chain is Multidrug transporter PA4990, found in Pseudomonas aeruginosa (strain ATCC 15692 / DSM 22644 / CIP 104116 / JCM 14847 / LMG 12228 / 1C / PRS 101 / PAO1).